Consider the following 156-residue polypeptide: Small ribosomal subunit protein uS7 (156 aa).

This sequence belongs to the universal ribosomal protein uS7 family. As to quaternary structure, part of the 30S ribosomal subunit. Contacts proteins S9 and S11.

Functionally, one of the primary rRNA binding proteins, it binds directly to 16S rRNA where it nucleates assembly of the head domain of the 30S subunit. Is located at the subunit interface close to the decoding center, probably blocks exit of the E-site tRNA. In Geotalea daltonii (strain DSM 22248 / JCM 15807 / FRC-32) (Geobacter daltonii), this protein is Small ribosomal subunit protein uS7.